A 256-amino-acid polypeptide reads, in one-letter code: 1-(5-phosphoribosyl)-5-[(5-phosphoribosylamino)methylideneamino] imidazole-4-carboxamide isomerase (256 aa).

The Proton acceptor role is filled by Asp-9. Asp-130 functions as the Proton donor in the catalytic mechanism.

Belongs to the HisA/HisF family.

It is found in the cytoplasm. It carries out the reaction 1-(5-phospho-beta-D-ribosyl)-5-[(5-phospho-beta-D-ribosylamino)methylideneamino]imidazole-4-carboxamide = 5-[(5-phospho-1-deoxy-D-ribulos-1-ylimino)methylamino]-1-(5-phospho-beta-D-ribosyl)imidazole-4-carboxamide. It participates in amino-acid biosynthesis; L-histidine biosynthesis; L-histidine from 5-phospho-alpha-D-ribose 1-diphosphate: step 4/9. This Prochlorococcus marinus (strain SARG / CCMP1375 / SS120) protein is 1-(5-phosphoribosyl)-5-[(5-phosphoribosylamino)methylideneamino] imidazole-4-carboxamide isomerase.